The sequence spans 1147 residues: Nitric oxide synthase, inducible (1147 aa).

The tract at residues 22–51 (KDINNNVEKTPGAIPSPTTQDDPKSHKHQN) is disordered. The DINNN-motif; mediates interaction with SPSB1, SPSB2 and SPSB4 motif lies at 23 to 27 (DINNN). 2 residues coordinate Zn(2+): C107 and C112. S115 serves as a coordination point for (6R)-L-erythro-5,6,7,8-tetrahydrobiopterin. C197 is a binding site for heme b. 4 residues coordinate L-arginine: Q260, W369, Y370, and E374. 4 residues coordinate (6R)-L-erythro-5,6,7,8-tetrahydrobiopterin: R378, I459, W460, and F473. Y488 is a binding site for heme b. The interval 512 to 532 (FTVLVKAVFFASVLMRKVMAS) is calmodulin-binding. The Flavodoxin-like domain occupies 536-674 (ATVLFATETG…AFRSWAVQTF (139 aa)). FMN-binding residues include T542, E543, T544, K546, and S547. T564 is modified (phosphothreonine). Residue Y572 is modified to Phosphotyrosine. Positions 588, 589, 625, 632, 658, and 662 each coordinate FMN. The region spanning 727–967 (KNVFTMRLKS…VRSVSGFQLP (241 aa)) is the FAD-binding FR-type domain. R747 is an NADP(+) binding site. Residues H769, R903, Y905, S906, T921, and A923 each contribute to the FAD site. Residue T926 coordinates NADP(+). FAD is bound by residues Y927, V940, C941, and S942. 8 residues coordinate NADP(+): T981, R1014, S1043, R1044, K1050, Y1052, Q1054, and D1087.

The protein belongs to the NOS family. In terms of assembly, homodimer. Interacts with NHERF1. Interacts with GAPDH; induced by oxidatively-modified low-densitity lipoprotein (LDL(ox)). Interacts with S100A8 and S100A9 to form the iNOS-S100A8/9 transnitrosylase complex. Interacts with SPSB1, SPSB2 and SPSB4. Interacts with ELOC and CUL5 in the presence of SPSB1 or SPSB2 or SPSB4. Forms a complex with ASL, ASS1 and HSP90AA1; the complex regulates cell-autonomous L-arginine synthesis and citrulline recycling while channeling extracellular L-arginine to nitric oxide synthesis pathway. It depends on heme b as a cofactor. The cofactor is FAD. Requires FMN as cofactor. (6R)-L-erythro-5,6,7,8-tetrahydrobiopterin is required as a cofactor. Polyubiquitinated; mediated by SPSB1, SPSB2 and SPSB4, leading to proteasomal degradation. As to expression, in normal kidney, expressed primarily in the medullary thick ascending limb, with minor amounts in the medullary collecting duct and vasa recta bundle.

It localises to the cytoplasm. Its subcellular location is the cytosol. It carries out the reaction 2 L-arginine + 3 NADPH + 4 O2 + H(+) = 2 L-citrulline + 2 nitric oxide + 3 NADP(+) + 4 H2O. Its activity is regulated as follows. Not stimulated by calcium/calmodulin. Aspirin inhibits expression and function of this enzyme and effects may be exerted at the level of translational/post-translational modification and directly on the catalytic activity. Functionally, produces nitric oxide (NO) which is a messenger molecule with diverse functions throughout the body. In macrophages, NO mediates tumoricidal and bactericidal actions. Also has nitrosylase activity and mediates cysteine S-nitrosylation of cytoplasmic target proteins such PTGS2/COX2. As component of the iNOS-S100A8/9 transnitrosylase complex involved in the selective inflammatory stimulus-dependent S-nitrosylation of GAPDH implicated in regulation of the GAIT complex activity and probably multiple targets including ANXA5, EZR, MSN and VIM. Involved in inflammation, enhances the synthesis of pro-inflammatory mediators such as IL6 and IL8. The chain is Nitric oxide synthase, inducible (Nos2) from Rattus norvegicus (Rat).